A 181-amino-acid polypeptide reads, in one-letter code: Peptide deformylase 1 (181 aa).

Residues C106 and H148 each contribute to the Fe cation site. E149 is an active-site residue. H152 serves as a coordination point for Fe cation.

This sequence belongs to the polypeptide deformylase family. Requires Fe(2+) as cofactor.

It carries out the reaction N-terminal N-formyl-L-methionyl-[peptide] + H2O = N-terminal L-methionyl-[peptide] + formate. Removes the formyl group from the N-terminal Met of newly synthesized proteins. Requires at least a dipeptide for an efficient rate of reaction. N-terminal L-methionine is a prerequisite for activity but the enzyme has broad specificity at other positions. This Burkholderia multivorans (strain ATCC 17616 / 249) protein is Peptide deformylase 1.